The following is a 217-amino-acid chain: DNA transformation protein TfoX (217 aa).

Belongs to the Sxy/TfoX family.

In terms of biological role, required for DNA transformation. Positively regulates genes required for DNA transformation (late competence-specific genes) in association with CRP. Required for expression of the late competence-specific gene, com101A. Required for expression of the dprABC operon. The protein is DNA transformation protein TfoX of Haemophilus influenzae (strain ATCC 51907 / DSM 11121 / KW20 / Rd).